The chain runs to 210 residues: Viral protein 1 (210 aa).

In Chaetoceros (Chaetoceros sp. DNA virus 7), this protein is Viral protein 1.